The sequence spans 409 residues: Peptide chain release factor subunit 1 (409 aa).

Belongs to the eukaryotic release factor 1 family. As to quaternary structure, heterodimer of two subunits, one of which binds GTP.

It is found in the cytoplasm. Its function is as follows. Directs the termination of nascent peptide synthesis (translation) in response to the termination codons UAA, UAG and UGA. This is Peptide chain release factor subunit 1 from Methanopyrus kandleri (strain AV19 / DSM 6324 / JCM 9639 / NBRC 100938).